A 281-amino-acid polypeptide reads, in one-letter code: 2-dehydro-3-deoxyphosphooctonate aldolase (281 aa).

The protein belongs to the KdsA family.

It is found in the cytoplasm. The enzyme catalyses D-arabinose 5-phosphate + phosphoenolpyruvate + H2O = 3-deoxy-alpha-D-manno-2-octulosonate-8-phosphate + phosphate. Its pathway is carbohydrate biosynthesis; 3-deoxy-D-manno-octulosonate biosynthesis; 3-deoxy-D-manno-octulosonate from D-ribulose 5-phosphate: step 2/3. The protein operates within bacterial outer membrane biogenesis; lipopolysaccharide biosynthesis. In Hahella chejuensis (strain KCTC 2396), this protein is 2-dehydro-3-deoxyphosphooctonate aldolase.